A 635-amino-acid polypeptide reads, in one-letter code: Biosynthetic arginine decarboxylase (635 aa).

Lys-100 is modified (N6-(pyridoxal phosphate)lysine). Substrate is bound at residue 282 to 292 (LDIGGGLGVDY).

It belongs to the Orn/Lys/Arg decarboxylase class-II family. SpeA subfamily. It depends on Mg(2+) as a cofactor. Requires pyridoxal 5'-phosphate as cofactor.

The catalysed reaction is L-arginine + H(+) = agmatine + CO2. The protein operates within amine and polyamine biosynthesis; agmatine biosynthesis; agmatine from L-arginine: step 1/1. Functionally, catalyzes the biosynthesis of agmatine from arginine. This Geotalea uraniireducens (strain Rf4) (Geobacter uraniireducens) protein is Biosynthetic arginine decarboxylase.